The chain runs to 206 residues: Probable GTP-binding protein EngB (206 aa).

The EngB-type G domain maps to 23–202 (HTAEVAFVGR…WGALLDTFGK (180 aa)). GTP is bound by residues 31 to 38 (GRSNVGKS), 58 to 62 (GRTRT), 83 to 86 (DLPG), 150 to 153 (TKVD), and 181 to 183 (FSS). Mg(2+) contacts are provided by Ser-38 and Thr-60.

It belongs to the TRAFAC class TrmE-Era-EngA-EngB-Septin-like GTPase superfamily. EngB GTPase family. Mg(2+) is required as a cofactor.

Functionally, necessary for normal cell division and for the maintenance of normal septation. This chain is Probable GTP-binding protein EngB, found in Myxococcus xanthus (strain DK1622).